We begin with the raw amino-acid sequence, 338 residues long: NADPH dehydrogenase (338 aa).

Position 22–25 (22–25 (SPMC)) interacts with FMN. Substrate is bound at residue Tyr27. 2 residues coordinate FMN: Ala59 and Gln101. A substrate-binding site is contributed by 163–166 (HAAH). FMN contacts are provided by residues Arg214 and 306-307 (GR).

Belongs to the NADH:flavin oxidoreductase/NADH oxidase family. NamA subfamily. In terms of assembly, homotetramer. Requires FMN as cofactor.

The catalysed reaction is A + NADPH + H(+) = AH2 + NADP(+). Its function is as follows. Catalyzes the reduction of the double bond of an array of alpha,beta-unsaturated aldehydes and ketones. It also reduces the nitro group of nitroester and nitroaromatic compounds. It could have a role in detoxification processes. This chain is NADPH dehydrogenase, found in Listeria monocytogenes serotype 4b (strain CLIP80459).